A 496-amino-acid polypeptide reads, in one-letter code: Glutamyl-tRNA(Gln) amidotransferase subunit A (496 aa).

Residues Lys-75 and Ser-150 each act as charge relay system in the active site. Ser-174 functions as the Acyl-ester intermediate in the catalytic mechanism.

Belongs to the amidase family. GatA subfamily. As to quaternary structure, heterotrimer of A, B and C subunits.

It catalyses the reaction L-glutamyl-tRNA(Gln) + L-glutamine + ATP + H2O = L-glutaminyl-tRNA(Gln) + L-glutamate + ADP + phosphate + H(+). Functionally, allows the formation of correctly charged Gln-tRNA(Gln) through the transamidation of misacylated Glu-tRNA(Gln) in organisms which lack glutaminyl-tRNA synthetase. The reaction takes place in the presence of glutamine and ATP through an activated gamma-phospho-Glu-tRNA(Gln). The sequence is that of Glutamyl-tRNA(Gln) amidotransferase subunit A from Burkholderia thailandensis (strain ATCC 700388 / DSM 13276 / CCUG 48851 / CIP 106301 / E264).